The chain runs to 215 residues: Fanconi anemia core complex-associated protein 24 (215 aa).

Residues 160–215 (LRTVQQIPGVGKVKAPLLLQKFPSIQQLSNASIGELEQVVGQAVAQQIHAFFTQPR) are ruvA domain 2-like.

As to quaternary structure, belongs to the multisubunit FA complex composed of FANCA, FANCB, FANCC, FANCE, FANCF, FANCG, FANCL/PHF9, FANCM and FAAP24. Interacts with FANCM.

The protein resides in the nucleus. Plays a role in DNA repair through recruitment of the FA core complex to damaged DNA. Regulates FANCD2 monoubiquitination upon DNA damage. Induces chromosomal instability as well as hypersensitivity to DNA cross-linking agents, when repressed. Targets FANCM/FAAP24 complex to the DNA, preferentially to single strand DNA. The sequence is that of Fanconi anemia core complex-associated protein 24 from Homo sapiens (Human).